We begin with the raw amino-acid sequence, 248 residues long: tRNA1(Val) (adenine(37)-N6)-methyltransferase (248 aa).

It belongs to the methyltransferase superfamily. tRNA (adenine-N(6)-)-methyltransferase family.

It is found in the cytoplasm. It carries out the reaction adenosine(37) in tRNA1(Val) + S-adenosyl-L-methionine = N(6)-methyladenosine(37) in tRNA1(Val) + S-adenosyl-L-homocysteine + H(+). Specifically methylates the adenine in position 37 of tRNA(1)(Val) (anticodon cmo5UAC). This chain is tRNA1(Val) (adenine(37)-N6)-methyltransferase, found in Yersinia pseudotuberculosis serotype O:1b (strain IP 31758).